Consider the following 980-residue polypeptide: Peroxisomal ATPase PEX6 (980 aa).

Arg-119 is subject to Omega-N-methylarginine. ATP contacts are provided by residues 470–477 (GPPGSGKT) and 744–751 (GPPGTGKT).

This sequence belongs to the AAA ATPase family. In terms of assembly, interacts with PEX1; forming the PEX1-PEX6 AAA ATPase complex, which is composed of a heterohexamer formed by a trimer of PEX1-PEX6 dimers. Interacts with PEX26; interaction is direct and promotes recruitment to peroxisomal membranes. Interacts with ZFAND6.

The protein localises to the cytoplasm. It is found in the cytosol. It localises to the peroxisome membrane. Its subcellular location is the cell projection. The protein resides in the cilium. The protein localises to the photoreceptor outer segment. It carries out the reaction ATP + H2O = ADP + phosphate + H(+). Component of the PEX1-PEX6 AAA ATPase complex, a protein dislocase complex that mediates the ATP-dependent extraction of the PEX5 receptor from peroxisomal membranes, an essential step for PEX5 recycling. Specifically recognizes PEX5 monoubiquitinated at 'Cys-11', and pulls it out of the peroxisome lumen through the PEX2-PEX10-PEX12 retrotranslocation channel. Extraction by the PEX1-PEX6 AAA ATPase complex is accompanied by unfolding of the TPR repeats and release of bound cargo from PEX5. The polypeptide is Peroxisomal ATPase PEX6 (Cricetulus griseus (Chinese hamster)).